Here is a 391-residue protein sequence, read N- to C-terminus: ATP phosphoribosyltransferase regulatory subunit (391 aa).

This sequence belongs to the class-II aminoacyl-tRNA synthetase family. HisZ subfamily. Heteromultimer composed of HisG and HisZ subunits.

The protein resides in the cytoplasm. The protein operates within amino-acid biosynthesis; L-histidine biosynthesis; L-histidine from 5-phospho-alpha-D-ribose 1-diphosphate: step 1/9. Functionally, required for the first step of histidine biosynthesis. May allow the feedback regulation of ATP phosphoribosyltransferase activity by histidine. The chain is ATP phosphoribosyltransferase regulatory subunit from Clostridium kluyveri (strain ATCC 8527 / DSM 555 / NBRC 12016 / NCIMB 10680 / K1).